We begin with the raw amino-acid sequence, 380 residues long: Cytochrome b (380 aa).

Helical transmembrane passes span 33–53, 77–98, 113–133, and 178–198; these read FGSLLGICLVLQILTGLFLAM, WFIRYLHANGASMFFICLYIHV, WNVGIILLFTVMATAFMGYVL, and FFAFHFILPFIIVALVMVHLL. 2 residues coordinate heme b: histidine 83 and histidine 97. Residues histidine 182 and histidine 196 each coordinate heme b. Histidine 201 serves as a coordination point for a ubiquinone. The next 4 helical transmembrane spans lie at 226 to 246, 288 to 308, 320 to 340, and 347 to 367; these read TKDILGVLLLILFLISLVLFA, LGGVLALITSILTLTLLPYLY, LTQLCYWMLVSDIMILTWIGA, and FITIGQVASILYFTIIIILMP.

The protein belongs to the cytochrome b family. The cytochrome bc1 complex contains 11 subunits: 3 respiratory subunits (MT-CYB, CYC1 and UQCRFS1), 2 core proteins (UQCRC1 and UQCRC2) and 6 low-molecular weight proteins (UQCRH/QCR6, UQCRB/QCR7, UQCRQ/QCR8, UQCR10/QCR9, UQCR11/QCR10 and a cleavage product of UQCRFS1). This cytochrome bc1 complex then forms a dimer. It depends on heme b as a cofactor.

It is found in the mitochondrion inner membrane. Its function is as follows. Component of the ubiquinol-cytochrome c reductase complex (complex III or cytochrome b-c1 complex) that is part of the mitochondrial respiratory chain. The b-c1 complex mediates electron transfer from ubiquinol to cytochrome c. Contributes to the generation of a proton gradient across the mitochondrial membrane that is then used for ATP synthesis. In Cricetomys emini (Emin's giant pouched rat), this protein is Cytochrome b (MT-CYB).